A 966-amino-acid polypeptide reads, in one-letter code: Mitogen-activated protein kinase kinase kinase 13 (966 aa).

The interval 1–59 is disordered; it reads MANPQEHLSCSSSPRLPLSENKTFNGLQDDLAPMGSHASPKLLKDQQEKGMVQTELAEG. A compositionally biased stretch (low complexity) spans 8–19; that stretch reads LSCSSSPRLPLS. The Protein kinase domain occupies 168-409; the sequence is ISELQWLGSG…FRQTLMHLDI (242 aa). Residues 174-182 and Lys195 each bind ATP; that span reads LGSGAQGAV. Asp279 acts as the Proton acceptor in catalysis. 2 leucine-zipper regions span residues 433 to 454 and 486 to 507; these read VKKH…DEEL and LSAI…EQAV. A coiled-coil region spans residues 457–496; it reads RRREELRHALDIREHYERKLERANNLYMELSAIMLQLEMR. Disordered regions lie at residues 561–663, 743–874, and 937–966; these read EVAP…GQDI, LDVP…DELA, and QFEE…SATW. Residues 567–581 are compositionally biased toward low complexity; it reads SPLSGSPKLSSSSSK. The span at 582-594 shows a compositional bias: basic residues; the sequence is SRYRSKPRHRRGN. The segment covering 609–622 has biased composition (polar residues); that stretch reads QPAQEDSPHPTSLH. Positions 629–642 are enriched in low complexity; it reads PSSQHHNLLQQQYQ. The span at 814-827 shows a compositional bias: acidic residues; that stretch reads DSSEEEEGEVDSEV. The interval 815 to 828 is acidic; the sequence is SSEEEEGEVDSEVE. Residues 840-855 show a composition bias toward polar residues; sequence SSCQSYSTFSSENFSV. Positions 939–950 are enriched in acidic residues; it reads EESDCDSSDGEC. Polar residues predominate over residues 954–966; it reads TVRTNKHYSSATW.

This sequence belongs to the protein kinase superfamily. Ser/Thr protein kinase family. Homodimer; forms dimers through the leucine-zipper motif. Interacts with the C-terminus of MAPK8IP1 through the kinase catalytic domain. Binds PRDX3. Associates with the IKK complex through the kinase domain. Mg(2+) is required as a cofactor. In terms of processing, autophosphorylated on serine and threonine residues.

The protein localises to the cytoplasm. The protein resides in the membrane. The enzyme catalyses L-seryl-[protein] + ATP = O-phospho-L-seryl-[protein] + ADP + H(+). It catalyses the reaction L-threonyl-[protein] + ATP = O-phospho-L-threonyl-[protein] + ADP + H(+). With respect to regulation, activated by autophosphorylation and homodimerization. Functionally, activates the JUN N-terminal pathway through activation of the MAP kinase kinase MAP2K7. Acts synergistically with PRDX3 to regulate the activation of NF-kappa-B in the cytosol. This activation is kinase-dependent and involves activating the IKK complex, the IKBKB-containing complex that phosphorylates inhibitors of NF-kappa-B. This Bos taurus (Bovine) protein is Mitogen-activated protein kinase kinase kinase 13 (MAP3K13).